The following is a 718-amino-acid chain: Tensin-4 (718 aa).

An N-terminal signal peptide occupies residues 1–14; it reads MSSSLLTGGHVVSL. 2 disordered regions span residues 188-244 and 272-437; these read RETR…GLRA and LPHS…AKDM. Positions 192-207 are enriched in polar residues; that stretch reads SSSNESLIFSGNQGRG. A compositionally biased stretch (low complexity) spans 208 to 219; that stretch reads SSPHTPSSLSNS. Ser230 carries the phosphoserine modification. Positions 272–304 are enriched in low complexity; that stretch reads LPHSSLSSYPPSSRSLGSPASSSSSLHSLDRGS. Composition is skewed to polar residues over residues 306–316, 337–349, 367–393, and 405–415; these read CVRSSDAQVPS, QASS…TNSM, PAQQ…QATK, and TSPSHLCQATK. Residues 451-558 enclose the SH2 domain; sequence WFKPSITREQ…ALPCKLTIPQ (108 aa). The 127-residue stretch at 585-711 folds into the PTB domain; it reads CHTLYLTSVS…SQVISLVTAL (127 aa).

Belongs to the PTEN phosphatase protein family. In terms of assembly, interacts (via SH2 domain) with Rho GTPase-activating protein DLC1 (via C-terminus); the interaction is independent of DLC1 tyrosine phosphorylation. Interacts with integrin ITGB1; the interaction displaces tensin TNS3 from the ITGB1 cytoplasmic tail and promotes ITGB1 stability. Interacts (via SH2 domain) with E3 ubiquitin-protein ligase CBL (phosphorylated on 'Tyr-781'); the interaction is enhanced in the presence of EGF and reduces interaction of CBL with EGFR. Interacts (via SH2 domain) with receptor tyrosine kinase MET (when phosphorylated); the interaction increases MET protein stability.

It is found in the cell junction. Its subcellular location is the focal adhesion. The protein localises to the cytoplasm. The protein resides in the cytoskeleton. Promotes EGF-induced cell migration by displacing tensin TNS3 from the cytoplasmic tail of integrin ITGB1 which results in dissociation of TNS3 from focal adhesions, disassembly of actin stress fibers and initiation of cell migration. Suppresses ligand-induced degradation of EGFR by reducing EGFR ubiquitination in the presence of EGF. Increases MET protein stability by inhibiting MET endocytosis and subsequent lysosomal degradation which leads to increased cell survival, proliferation and migration. The sequence is that of Tensin-4 (Tns4) from Rattus norvegicus (Rat).